The following is an 89-amino-acid chain: Small ribosomal subunit protein uS14 (89 aa).

Belongs to the universal ribosomal protein uS14 family. In terms of assembly, part of the 30S ribosomal subunit. Contacts proteins S3 and S10.

In terms of biological role, binds 16S rRNA, required for the assembly of 30S particles and may also be responsible for determining the conformation of the 16S rRNA at the A site. This Chlorobium luteolum (strain DSM 273 / BCRC 81028 / 2530) (Pelodictyon luteolum) protein is Small ribosomal subunit protein uS14.